The sequence spans 408 residues: LL-diaminopimelate aminotransferase (408 aa).

2 residues coordinate substrate: Tyr-15 and Gly-42. Residues Tyr-72, 108–109 (SK), Tyr-132, Asn-187, Tyr-218, and 246–248 (SFS) contribute to the pyridoxal 5'-phosphate site. Residues Lys-109, Tyr-132, and Asn-187 each contribute to the substrate site. Lys-249 is subject to N6-(pyridoxal phosphate)lysine. Pyridoxal 5'-phosphate is bound by residues Arg-257 and Asn-292. Asn-292 and Arg-388 together coordinate substrate.

Belongs to the class-I pyridoxal-phosphate-dependent aminotransferase family. LL-diaminopimelate aminotransferase subfamily. Homodimer. The cofactor is pyridoxal 5'-phosphate.

The enzyme catalyses (2S,6S)-2,6-diaminopimelate + 2-oxoglutarate = (S)-2,3,4,5-tetrahydrodipicolinate + L-glutamate + H2O + H(+). The protein operates within amino-acid biosynthesis; L-lysine biosynthesis via DAP pathway; LL-2,6-diaminopimelate from (S)-tetrahydrodipicolinate (aminotransferase route): step 1/1. Functionally, involved in the synthesis of meso-diaminopimelate (m-DAP or DL-DAP), required for both lysine and peptidoglycan biosynthesis. Catalyzes the direct conversion of tetrahydrodipicolinate to LL-diaminopimelate. Is also able to catalyze the reverse reaction in vitro, i.e. the transamination of LL-diaminopimelate with 2-oxoglutarate to produce tetrahydrodipicolinate and glutamate. Cannot use m-DAP, lysine or ornithine as the amino-group donor, when using 2-oxoglutarate as the amino-group acceptor. Cannot use pyruvate, indole 3-pyruvate, oxaloacetate or phenyl pyruvate as the amino-group acceptor, when using LL-DAP as the amino-group donor. This chain is LL-diaminopimelate aminotransferase, found in Leptospira interrogans serogroup Icterohaemorrhagiae serovar copenhageni (strain Fiocruz L1-130).